Consider the following 1679-residue polypeptide: Furin-like protease 2 (1679 aa).

A compositionally biased stretch (polar residues) spans 1-10; it reads MSNTTRSSRV. The segment at 1–42 is disordered; that stretch reads MSNTTRSSRVTIGRIGTTPQITDPWSSGLEKQRPSRCGGPKS. Residues N3, N109, and N130 are each glycosylated (N-linked (GlcNAc...) asparagine). Residues 139–164 form a disordered region; sequence VSSLHSSRRTNPPSSSSSSSSNVDVD. The segment covering 147–160 has biased composition (low complexity); it reads RTNPPSSSSSSSSN. A glycan (N-linked (GlcNAc...) asparagine) is linked at N205. Positions 383–705 constitute a Peptidase S8 domain; the sequence is QWYLNGGAKD…YGLMDAGAMV (323 aa). The active-site Charge relay system is the D417. Residues 424–456 form a disordered region; it reads HPDLAQNYDPEASFDINGNDSDPTPQDNGDNKH. The span at 439–451 shows a compositional bias: polar residues; sequence INGNDSDPTPQDN. N442 carries an N-linked (GlcNAc...) asparagine glycan. H456 (charge relay system) is an active-site residue. Intrachain disulfides connect C473–C629 and C565–C595. N-linked (GlcNAc...) asparagine glycosylation is present at N480. S637 serves as the catalytic Charge relay system. The P/Homo B domain maps to 714–852; it reads VPPQHICKSR…QLIFYGTSTQ (139 aa). C720 and C748 are disulfide-bonded. N927 carries N-linked (GlcNAc...) asparagine glycosylation. 10 FU repeats span residues 961–1006, 1009–1056, 1060–1104, 1107–1152, 1156–1204, 1208–1253, 1256–1299, 1301–1346, 1348–1393, and 1396–1443; these read KKIL…RSFP, VGIC…GYFE, NRTC…DTYE, DNKC…GFYA, RLEC…SEFY, EGQC…GFFV, GSLC…GYYS, RGIC…GFYK, DFGC…QYYD, and SATC…QTLA. N-linked (GlcNAc...) asparagine glycosylation is present at N1060. The N-linked (GlcNAc...) asparagine glycan is linked to N1181. N-linked (GlcNAc...) asparagine glycosylation is found at N1274 and N1277. N1439 carries an N-linked (GlcNAc...) asparagine glycan. Residues 1512 to 1532 traverse the membrane as a helical segment; sequence AIAVAICLLIITIFSIIFAVL. The Cytoplasmic segment spans residues 1533–1679; the sequence is QRNSNHVSRN…STTSRTNIRS (147 aa). Residues 1660–1679 are disordered; it reads TNAERKNHPSSTTSRTNIRS. Positions 1668–1679 are enriched in polar residues; that stretch reads PSSTTSRTNIRS.

It belongs to the peptidase S8 family. Furin subfamily. Ca(2+) serves as cofactor. Transient expression in a subset of central nervous system neurons during embryonic stages 12-13. Expression in developing tracheal tree from stage 13 to end of embryonic development.

Its subcellular location is the membrane. The catalysed reaction is Release of mature proteins from their proproteins by cleavage of -Arg-Xaa-Yaa-Arg-|-Zaa- bonds, where Xaa can be any amino acid and Yaa is Arg or Lys. Releases albumin, complement component C3 and von Willebrand factor from their respective precursors.. Its function is as follows. Furin is likely to represent the ubiquitous endoprotease activity within constitutive secretory pathways and capable of cleavage at the RX(K/R)R consensus motif. The protein is Furin-like protease 2 (Fur2) of Drosophila melanogaster (Fruit fly).